Reading from the N-terminus, the 509-residue chain is Type II methyltransferase M.BsoBI (509 aa).

It belongs to the N(4)/N(6)-methyltransferase family. N(4) subfamily.

It carries out the reaction a 2'-deoxycytidine in DNA + S-adenosyl-L-methionine = an N(4)-methyl-2'-deoxycytidine in DNA + S-adenosyl-L-homocysteine + H(+). An alpha subtype methylase that recognizes the double-stranded sequence 5'-CYCGRG-3', methylates C-1 on both strands, and protects the DNA from cleavage by the BsoBI endonuclease. The sequence is that of Type II methyltransferase M.BsoBI from Geobacillus stearothermophilus (Bacillus stearothermophilus).